The sequence spans 163 residues: Small heat shock protein C1 (163 aa).

Positions 55–163 (MFYESSSIKS…EQDAKEITIN (109 aa)) constitute a sHSP domain.

It belongs to the small heat shock protein (HSP20) family.

In Rickettsia typhi (strain ATCC VR-144 / Wilmington), this protein is Small heat shock protein C1 (hspC1).